We begin with the raw amino-acid sequence, 119 residues long: Ribonuclease P protein component (119 aa).

The protein belongs to the RnpA family. As to quaternary structure, consists of a catalytic RNA component (M1 or rnpB) and a protein subunit.

The enzyme catalyses Endonucleolytic cleavage of RNA, removing 5'-extranucleotides from tRNA precursor.. RNaseP catalyzes the removal of the 5'-leader sequence from pre-tRNA to produce the mature 5'-terminus. It can also cleave other RNA substrates such as 4.5S RNA. The protein component plays an auxiliary but essential role in vivo by binding to the 5'-leader sequence and broadening the substrate specificity of the ribozyme. The sequence is that of Ribonuclease P protein component from Halalkalibacterium halodurans (strain ATCC BAA-125 / DSM 18197 / FERM 7344 / JCM 9153 / C-125) (Bacillus halodurans).